The following is a 399-amino-acid chain: Elongation factor Tu (399 aa).

Residues 10–209 (KPHVNIGTIG…AVDEYIPTPE (200 aa)) enclose the tr-type G domain. Residues 19–26 (GHVDHGKT) are G1. 19–26 (GHVDHGKT) provides a ligand contact to GTP. Threonine 26 contributes to the Mg(2+) binding site. Residues 60–64 (GITIN) are G2. Positions 81-84 (DCPG) are G3. GTP-binding positions include 81 to 85 (DCPGH) and 136 to 139 (NKMD). The tract at residues 136-139 (NKMD) is G4. The tract at residues 174-176 (SAL) is G5.

It belongs to the TRAFAC class translation factor GTPase superfamily. Classic translation factor GTPase family. EF-Tu/EF-1A subfamily. In terms of assembly, monomer.

It is found in the cytoplasm. It carries out the reaction GTP + H2O = GDP + phosphate + H(+). Functionally, GTP hydrolase that promotes the GTP-dependent binding of aminoacyl-tRNA to the A-site of ribosomes during protein biosynthesis. This Nautilia profundicola (strain ATCC BAA-1463 / DSM 18972 / AmH) protein is Elongation factor Tu.